A 541-amino-acid chain; its full sequence is Catalase (541 aa).

The segment at Met-1 to Gln-20 is disordered. Catalysis depends on residues His-74 and Asn-147. Position 357 (Tyr-357) interacts with heme.

It belongs to the catalase family. It depends on heme as a cofactor.

It is found in the peroxisome matrix. The enzyme catalyses 2 H2O2 = O2 + 2 H2O. Its function is as follows. Catalyzes the degradation of hydrogen peroxide (H(2)O(2)) generated by peroxisomal oxidases to water and oxygen, thereby protecting cells from the toxic effects of hydrogen peroxide. The polypeptide is Catalase (CAT) (Ascaris suum (Pig roundworm)).